Consider the following 773-residue polypeptide: Ribosomal protein S6 kinase alpha-4 (773 aa).

Positions 33-301 constitute a Protein kinase 1 domain; sequence FALLKVLGTG…AQEVKSHPFF (269 aa). ATP contacts are provided by residues 39–47 and lysine 65; that span reads LGTGAYGKV. Aspartate 161 serves as the catalytic Proton acceptor. The residue at position 196 (serine 196) is a Phosphoserine; by autocatalysis. The 70-residue stretch at 302-371 folds into the AGC-kinase C-terminal domain; sequence QGLDWVALAA…VAPSILFDHN (70 aa). Serine 343 is modified (phosphoserine; by MAPK1, MAPK3 and MAPK14). At serine 347 the chain carries Phosphoserine. Phosphoserine; by autocatalysis occurs at positions 360 and 365. Residues 417–425 and lysine 440 each bind ATP; that span reads LGQGSFSVC. A Protein kinase 2 domain is found at 417–674; that stretch reads LGQGSFSVCR…LEGLRSSSWL (258 aa). Aspartate 530 (proton acceptor) is an active-site residue. Threonine 542 is modified (phosphothreonine). Residue threonine 568 is modified to Phosphothreonine; by MAPK1, MAPK3 and MAPK14. 2 positions are modified to phosphoserine: serine 634 and serine 678. Disordered regions lie at residues 674–696 and 728–773; these read LQDG…SSGP and AKRR…LSPS. Position 687 is a phosphothreonine (threonine 687). Serine 737 and serine 745 each carry phosphoserine; by autocatalysis.

The protein belongs to the protein kinase superfamily. AGC Ser/Thr protein kinase family. S6 kinase subfamily. Forms a complex with either MAPK1/ERK2 or MAPK3/ERK1 in quiescent cells which transiently dissociates following mitogenic stimulation. Also associates with MAPK14/p38-alpha. Activated RPS6KA4 associates with and phosphorylates the NF-kappa-B p65 subunit RELA. Mg(2+) serves as cofactor. In terms of processing, ser-343 and Thr-568 phosphorylation is required for kinase activity. Ser-343 and Ser-196 are autophosphorylated by the C-terminal kinase domain, and their phosphorylation is essential for the catalytic activity of the N-terminal kinase domain. Phosphorylated at Ser-343, Thr-568 and Thr-687 by MAPK1/ERK2, MAPK3/ERK1 and MAPK14/p38-alpha. Autophosphorylated at Ser-737 and Ser-745 by the N-terminal kinase domain.

The protein localises to the nucleus. It catalyses the reaction L-seryl-[protein] + ATP = O-phospho-L-seryl-[protein] + ADP + H(+). The catalysed reaction is L-threonyl-[protein] + ATP = O-phospho-L-threonyl-[protein] + ADP + H(+). Activated by phosphorylation at Ser-343, Thr-568 and Thr-687 by MAPK1/ERK2, MAPK3/ERK1 and MAPK14/p38-alpha, and by further autophosphorylation of Ser-196, Ser-360 and Ser-365 by the activated C-terminal kinase domain. Its function is as follows. Serine/threonine-protein kinase that is required for the mitogen or stress-induced phosphorylation of the transcription factors CREB1 and ATF1 and for the regulation of the transcription factor RELA, and that contributes to gene activation by histone phosphorylation and functions in the regulation of inflammatory genes. Phosphorylates CREB1 and ATF1 in response to mitogenic or stress stimuli such as UV-C irradiation, epidermal growth factor (EGF) and anisomycin. Plays an essential role in the control of RELA transcriptional activity in response to TNF. Phosphorylates 'Ser-10' of histone H3 in response to mitogenics, stress stimuli and EGF, which results in the transcriptional activation of several immediate early genes, including proto-oncogenes c-fos/FOS and c-jun/JUN. May also phosphorylate 'Ser-28' of histone H3. Mediates the mitogen- and stress-induced phosphorylation of high mobility group protein 1 (HMGN1/HMG14). In lipopolysaccharide-stimulated primary macrophages, acts downstream of the Toll-like receptor TLR4 to limit the production of pro-inflammatory cytokines. Functions probably by inducing transcription of the MAP kinase phosphatase DUSP1 and the anti-inflammatory cytokine interleukin 10 (IL10), via CREB1 and ATF1 transcription factors. This Mus musculus (Mouse) protein is Ribosomal protein S6 kinase alpha-4 (Rps6ka4).